The sequence spans 697 residues: Elongation factor G (697 aa).

A tr-type G domain is found at 8–282; that stretch reads ENTRNIGIMA…AIVDYMPSPV (275 aa). GTP contacts are provided by residues 17–24, 81–85, and 135–138; these read AHIDAGKT, DTPGH, and NKMD.

The protein belongs to the TRAFAC class translation factor GTPase superfamily. Classic translation factor GTPase family. EF-G/EF-2 subfamily.

The protein resides in the cytoplasm. Its function is as follows. Catalyzes the GTP-dependent ribosomal translocation step during translation elongation. During this step, the ribosome changes from the pre-translocational (PRE) to the post-translocational (POST) state as the newly formed A-site-bound peptidyl-tRNA and P-site-bound deacylated tRNA move to the P and E sites, respectively. Catalyzes the coordinated movement of the two tRNA molecules, the mRNA and conformational changes in the ribosome. This is Elongation factor G from Acetivibrio thermocellus (strain ATCC 27405 / DSM 1237 / JCM 9322 / NBRC 103400 / NCIMB 10682 / NRRL B-4536 / VPI 7372) (Clostridium thermocellum).